Here is a 637-residue protein sequence, read N- to C-terminus: tRNA uridine 5-carboxymethylaminomethyl modification enzyme MnmG (637 aa).

14–19 is a binding site for FAD; it reads GAGHAG. 279–293 provides a ligand contact to NAD(+); the sequence is GPRYCPSIEDKVVRF.

This sequence belongs to the MnmG family. In terms of assembly, homodimer. Heterotetramer of two MnmE and two MnmG subunits. Requires FAD as cofactor.

It is found in the cytoplasm. Its function is as follows. NAD-binding protein involved in the addition of a carboxymethylaminomethyl (cmnm) group at the wobble position (U34) of certain tRNAs, forming tRNA-cmnm(5)s(2)U34. In Desulfitobacterium hafniense (strain DSM 10664 / DCB-2), this protein is tRNA uridine 5-carboxymethylaminomethyl modification enzyme MnmG.